Consider the following 274-residue polypeptide: Ciliary microtubule inner protein 2B (274 aa).

Disordered regions lie at residues 46-89 (SPGL…SSMV) and 119-171 (TQRN…MDDR). Residues 130-155 (LPKEAKGEKDVEKDQEPKPEVEKEPE) show a composition bias toward basic and acidic residues.

The protein belongs to the CIMIP2 family. In terms of assembly, microtubule inner protein component of sperm flagellar doublet microtubules. As to expression, expressed in trachea multiciliated cells.

The protein localises to the cytoplasm. Its subcellular location is the cytoskeleton. The protein resides in the cilium axoneme. It localises to the flagellum axoneme. Microtubule inner protein (MIP) part of the dynein-decorated doublet microtubules (DMTs) in cilia axoneme, which is required for motile cilia beating. This chain is Ciliary microtubule inner protein 2B (CIMIP2B), found in Bos taurus (Bovine).